A 95-amino-acid polypeptide reads, in one-letter code: MIRSELIQKLSDENPHLYQRDVERIVNSIFEEVIDALAAGDRVELRGFGAFSVKKRDARIGRNPRTGESVSVEEKHVPFFKAGKLLRDRLNGHES.

It belongs to the bacterial histone-like protein family. As to quaternary structure, heterodimer of an alpha and a beta chain.

Its function is as follows. This protein is one of the two subunits of integration host factor, a specific DNA-binding protein that functions in genetic recombination as well as in transcriptional and translational control. The sequence is that of Integration host factor subunit beta from Jannaschia sp. (strain CCS1).